The chain runs to 372 residues: METKKTLREGYTTGSCAAAATKAALTALITGQVQTDATIRLPIGRVVTFSLASCSFEGETATAAVVKDGGDDPDATHGALIVSTVSWASSPGVHIDGGEGVGRVTKPGLPVPVGEAAINPVPRQMIREAVNEVLAQYGLHRGVKVVISVPGGEEIAKKTLNPRLGIMGGISILGTRGIVVPFSTAAYRASIVQALQVAKANGCRHVVITTGGRSEKYAMQEYPHLPEEAFIEMGDFVGFTLKQCKRLGIKMVSMVGMMGKFSKVAQGVMMVHSKSAPVDFGFLAALAEQAGASSALVAAVRGANTAAQVGDMMQEAGCTKFFELLCEACCRAALNEVGGGLTVATSIYTMNGQRLGKAVQIDGDDETDRRGS.

It belongs to the CbiD family.

It catalyses the reaction Co-precorrin-5B + S-adenosyl-L-methionine = Co-precorrin-6A + S-adenosyl-L-homocysteine. It participates in cofactor biosynthesis; adenosylcobalamin biosynthesis; cob(II)yrinate a,c-diamide from sirohydrochlorin (anaerobic route): step 6/10. Functionally, catalyzes the methylation of C-1 in cobalt-precorrin-5B to form cobalt-precorrin-6A. This Geobacillus kaustophilus (strain HTA426) protein is Cobalt-precorrin-5B C(1)-methyltransferase.